The sequence spans 1381 residues: EH domain-containing and endocytosis protein 1 (1381 aa).

2 consecutive EH domains span residues 14–113 (EQAF…NPAP) and 135–227 (DIAK…IRLE). EF-hand domains lie at 47 to 82 (LPGQ…IAQL) and 167 to 202 (LPNQ…IQLC). Positions 180, 182, 184, and 191 each coordinate Ca(2+). Phosphothreonine is present on threonine 238. Phosphoserine occurs at positions 241 and 244. The residue at position 245 (threonine 245) is a Phosphothreonine. Serine 248 and serine 249 each carry phosphoserine. Threonine 251 bears the Phosphothreonine mark. Serine 265 bears the Phosphoserine mark. The EF-hand 3 domain occupies 276-311 (EKKQQFDAIFDSLDKQHAGSLSSAVLVPFFLSSRLN). The EH 3 domain occupies 277–366 (KKQQFDAIFD…NELLQSPALG (90 aa)). Residues 389–535 (SKPSLQDMPH…SSPVKRTAST (147 aa)) are disordered. 2 stretches are compositionally biased toward polar residues: residues 404–424 (AVNT…NGSL) and 432–447 (PSFS…TVVQ). Serine 419 bears the Phosphoserine mark. Residues 448–470 (NNTNNSFSYDNNNGQATLQQQQP) show a composition bias toward low complexity. A phosphothreonine mark is found at threonine 450, threonine 477, and threonine 487. Polar residues predominate over residues 477–494 (THSSSGLKKFTPTSNFGQ). Phosphoserine is present on serine 495. Positions 593–882 (GEASAQLSNA…RELSERQMNL (290 aa)) form a coiled coil. Residue lysine 674 forms a Glycyl lysine isopeptide (Lys-Gly) (interchain with G-Cter in ubiquitin) linkage. Serine 848 is subject to Phosphoserine. The disordered stretch occupies residues 898 to 919 (SASNTDTTTKEATSRGNVHEDT). Basic and acidic residues predominate over residues 905–919 (TTKEATSRGNVHEDT). Phosphoserine occurs at positions 931, 950, 964, 1008, 1012, and 1020. 3 disordered regions span residues 933-1202 (LNVN…KDEF), 1214-1285 (VEED…QVSN), and 1298-1322 (SKAE…NDPI). Over residues 937 to 957 (RVKDDEEKTERTESDVFDRDV) the composition is skewed to basic and acidic residues. Composition is skewed to polar residues over residues 960–989 (LGSQ…LTET) and 1005–1019 (RSQS…NAPQ). Basic and acidic residues predominate over residues 1021-1036 (VRDDVELPETLEERDT). Composition is skewed to polar residues over residues 1037 to 1049 (INNT…TGNL) and 1061 to 1073 (ATAS…NETT). Threonine 1046 bears the Phosphothreonine mark. A phosphoserine mark is found at serine 1069, serine 1087, serine 1093, serine 1095, serine 1096, and serine 1100. The segment covering 1093-1103 (SVSSIQESPKI) has biased composition (polar residues). Threonine 1111 carries the post-translational modification Phosphothreonine. The span at 1127-1139 (SDSSSSDDDEFED) shows a compositional bias: acidic residues. 2 stretches are compositionally biased toward polar residues: residues 1147-1164 (TVKT…SSLE) and 1178-1195 (TSPS…TNSI). Phosphoserine is present on residues serine 1181 and serine 1187. The span at 1214–1226 (VEEDNGADSESEF) shows a compositional bias: acidic residues. The interval 1217-1381 (DNGADSESEF…AATNFLLDSA (165 aa)) is able to bind biological membranes. Positions 1253 to 1285 (NAFTGTLTSSSNPTIPKPQVQQQSTSDPAQVSN) are enriched in polar residues. A Phosphothreonine modification is found at threonine 1307. Lysine 1329 is covalently cross-linked (Glycyl lysine isopeptide (Lys-Gly) (interchain with G-Cter in ubiquitin)). One can recognise a UBA domain in the interval 1338-1380 (ATTPKSLAVEELSGMGFTEEEAHNALEKCNWDLEAATNFLLDS). Residue serine 1343 is modified to Phosphoserine.

Belongs to the VDP/USO1/EDE1 family. Interacts (via UBA domain) with monoubiquitin and ENT1 (via asparagine-proline-phenylalanine tripeptide motif called NPF). Interacts with PAL1 and SYP1.

The protein localises to the cytoplasm. Functions at the internalization step of the clathrin-mediated endocytosis (CME) as an early-acting scaffold protein. Requires clathrin adapter proteins, ENT1/2 and YAP1801/2, for normal spatiotemporal dynamics and viability. Binds to biological membranes in a ubiquitin-dependent manner. The chain is EH domain-containing and endocytosis protein 1 (EDE1) from Saccharomyces cerevisiae (strain ATCC 204508 / S288c) (Baker's yeast).